Here is a 95-residue protein sequence, read N- to C-terminus: RING finger protein Z (95 aa).

G2 carries the N-myristoyl glycine; by host lipid modification. Residues 38-74 form an RING-type; atypical zinc finger; sequence CKSCWFANKGLLKCSNHYLCLKCLTLMLRRSDYCGIC. A PTAP/PSAP motif motif is present at residues 88-91; the sequence is PSAP.

This sequence belongs to the arenaviridae Z protein family. Interacts with protein NP; this interaction probably directs the encapsidated genome to budding sites. Interacts (via RING domain) with polymerase L; this interaction inhibits viral transcription and replication, Z partially blocks the product exit tunnel for the releasing nascent RNA product. Interacts with the glycoprotein complex; this interaction plays a role in virion budding. Interacts with host eIF4E; this interaction results in eIF4E reduced affinity for its substrate, the 5'-m7 G cap structure. Interacts (via late-budding domain) with host TSG101; this interaction is essential for budding and release of viral particles. Interacts with host RPLP0; this interaction may serve to load ribosome-like particles inside the virion. Interacts with host PML; this interaction induces PML bodies redistribution in the cytoplasm upon viral infection. In terms of processing, myristoylation is required for the role of RING finger protein Z in assembly and budding.

It localises to the virion. The protein resides in the host cytoplasm. The protein localises to the host perinuclear region. Its subcellular location is the host cell membrane. Plays a crucial role in virion assembly and budding. Expressed late in the virus life cycle, it acts as an inhibitor of viral transcription and RNA synthesis by interacting with the viral polymerase L. Presumably recruits the NP encapsidated genome to cellular membranes at budding sites via direct interaction with NP. Plays critical roles in the final steps of viral release by interacting with host TSG101, a member of the vacuolar protein-sorting pathway and using other cellular host proteins involved in vesicle formation pathway. The budding of the virus progeny occurs after association of protein Z with the viral glycoprotein complex SSP-GP1-GP2 at the cell periphery, step that requires myristoylation of protein Z. Also selectively represses protein production by associating with host eIF4E. In cell-based minigenome assay, has an inhibitory effect on the ribonucleoprotein machinery (vRNP), which is responsible for the replication and transcription of the viral genome. The polypeptide is RING finger protein Z (Neotoma (wood rats)).